A 740-amino-acid polypeptide reads, in one-letter code: Probable type IV piliation system protein DR_0774 (740 aa).

A signal peptide spans 1 to 20; it reads MNKRHALLLTAVLGMATAYA.

The protein belongs to the bacterial secretin family.

Its subcellular location is the cell envelope. In terms of biological role, could be part of the type IV piliation system (T4P). May contribute at the cohesion between the S-layer and the outer membrane by forming oligomers. Could also be the main channel through which trafficking is managed. The polypeptide is Probable type IV piliation system protein DR_0774 (Deinococcus radiodurans (strain ATCC 13939 / DSM 20539 / JCM 16871 / CCUG 27074 / LMG 4051 / NBRC 15346 / NCIMB 9279 / VKM B-1422 / R1)).